The sequence spans 166 residues: Ribonuclease H (166 aa).

One can recognise an RNase H type-1 domain in the interval 5–147 (PRKRVALFTD…VDREARRQAQ (143 aa)). Residues Asp14, Glu52, Asp74, and Asp139 each contribute to the Mg(2+) site. A disordered region spans residues 128-166 (GHTGHPENERVDREARRQAQSQAKTPCPPRAPTLFHEEA). Residues 131–144 (GHPENERVDREARR) show a composition bias toward basic and acidic residues.

Belongs to the RNase H family. Monomer. Mg(2+) is required as a cofactor.

The catalysed reaction is Endonucleolytic cleavage to 5'-phosphomonoester.. Endonuclease that specifically degrades the RNA of RNA-DNA hybrids. The chain is Ribonuclease H (rnhA) from Thermus thermophilus (strain ATCC 27634 / DSM 579 / HB8).